Reading from the N-terminus, the 446-residue chain is Cyclin-F2-2 (446 aa).

A disordered region spans residues 191 to 216 (YNGDNDAPAPDNSTASRPQLCAPYDD).

This sequence belongs to the cyclin family. Cyclin F subfamily.

The protein is Cyclin-F2-2 (CYCF2-2) of Oryza sativa subsp. japonica (Rice).